The chain runs to 236 residues: 2-C-methyl-D-erythritol 4-phosphate cytidylyltransferase (236 aa).

The protein belongs to the IspD/TarI cytidylyltransferase family. IspD subfamily. As to quaternary structure, homodimer.

It carries out the reaction 2-C-methyl-D-erythritol 4-phosphate + CTP + H(+) = 4-CDP-2-C-methyl-D-erythritol + diphosphate. Its pathway is isoprenoid biosynthesis; isopentenyl diphosphate biosynthesis via DXP pathway; isopentenyl diphosphate from 1-deoxy-D-xylulose 5-phosphate: step 2/6. Functionally, catalyzes the formation of 4-diphosphocytidyl-2-C-methyl-D-erythritol from CTP and 2-C-methyl-D-erythritol 4-phosphate (MEP). The sequence is that of 2-C-methyl-D-erythritol 4-phosphate cytidylyltransferase from Escherichia coli O45:K1 (strain S88 / ExPEC).